The chain runs to 647 residues: XK-related protein 4 (647 aa).

Residues 142 to 162 traverse the membrane as a helical segment; that stretch reads WFGLTLFFVVLGSLSVQVFSF. The segment at 193-238 is disordered; sequence VSSGSAAGEGEARPSTPQRQASNASKSNIAATNSGSNSNGATRTSG. At Ser-197 the chain carries Phosphoserine. The span at 207-236 shows a compositional bias: polar residues; the sequence is STPQRQASNASKSNIAATNSGSNSNGATRT. The next 7 membrane-spanning stretches (helical) occupy residues 245 to 265, 328 to 348, 362 to 382, 393 to 415, 425 to 445, 454 to 474, and 484 to 504; these read CSFCIWLLQSLIHILQLGQVW, LQALQGFTAAASLVSLAWALA, KPISYMAVIIQFCWHFFTIAA, VFQLYFGIFIVLHWCIMTFWIVH, WEEIVFDMVVGIIYIFSWFNV, LFIYYFVILLENTALSALWYL, and FAIPALCVVFSSFLTGVVFML.

This sequence belongs to the XK family. In terms of assembly, homodimer; homodimerization takes place upon caspase cleavage. Interacts with the processed C-terminus of XRCC4 (protein XRCC4, C-terminus); interaction promotes the phospholipid scramblase activity. Post-translationally, undergoes proteolytic processing by caspase-3 (CASP3), caspase-6 (CASP6) and caspase-7 (CASP7) to generate the XK-related protein 4, processed form, leading to its activation.

The protein resides in the cell membrane. It catalyses the reaction a 1,2-diacyl-sn-glycero-3-phospho-L-serine(in) = a 1,2-diacyl-sn-glycero-3-phospho-L-serine(out). Phospholipid scramblase activity is activated upon caspase cleavage to generate the XK-related protein 4, processed form. Does not act prior the onset of apoptosis. With respect to regulation, homodimerizes upon caspase cleavage. Phospholipid scramblase activity is activated following interaction with the processed C-terminus of XRCC4 (protein XRCC4, C-terminus). Phospholipid scramblase that promotes phosphatidylserine exposure on apoptotic cell surface. Phosphatidylserine is a specific marker only present at the surface of apoptotic cells and acts as a specific signal for engulfment. This is XK-related protein 4 from Rattus norvegicus (Rat).